The sequence spans 92 residues: Isoleucine--tRNA ligase (92 aa).

Residues C55, C58, C75, and C78 each contribute to the Zn(2+) site.

This sequence belongs to the class-I aminoacyl-tRNA synthetase family. IleS type 1 subfamily. Monomer. Zn(2+) is required as a cofactor.

The protein resides in the cytoplasm. It catalyses the reaction tRNA(Ile) + L-isoleucine + ATP = L-isoleucyl-tRNA(Ile) + AMP + diphosphate. Catalyzes the attachment of isoleucine to tRNA(Ile). As IleRS can inadvertently accommodate and process structurally similar amino acids such as valine, to avoid such errors it has two additional distinct tRNA(Ile)-dependent editing activities. One activity is designated as 'pretransfer' editing and involves the hydrolysis of activated Val-AMP. The other activity is designated 'posttransfer' editing and involves deacylation of mischarged Val-tRNA(Ile). This is Isoleucine--tRNA ligase (ileS) from Klebsiella aerogenes (Enterobacter aerogenes).